A 510-amino-acid chain; its full sequence is Probable cytosol aminopeptidase (510 aa).

Residues lysine 254 and aspartate 259 each coordinate Mn(2+). Lysine 266 is a catalytic residue. 3 residues coordinate Mn(2+): aspartate 277, aspartate 336, and glutamate 338. Residue arginine 340 is part of the active site. Residues 487-510 (AQPVKASPKTRPARKSTPAAKTRA) form a disordered region.

Belongs to the peptidase M17 family. It depends on Mn(2+) as a cofactor.

The protein localises to the cytoplasm. The enzyme catalyses Release of an N-terminal amino acid, Xaa-|-Yaa-, in which Xaa is preferably Leu, but may be other amino acids including Pro although not Arg or Lys, and Yaa may be Pro. Amino acid amides and methyl esters are also readily hydrolyzed, but rates on arylamides are exceedingly low.. It catalyses the reaction Release of an N-terminal amino acid, preferentially leucine, but not glutamic or aspartic acids.. In terms of biological role, presumably involved in the processing and regular turnover of intracellular proteins. Catalyzes the removal of unsubstituted N-terminal amino acids from various peptides. The sequence is that of Probable cytosol aminopeptidase from Polaromonas naphthalenivorans (strain CJ2).